We begin with the raw amino-acid sequence, 431 residues long: MITDRVSDYLEKIEKSDVNAFIDVNGEKVLKEAEELEKNDTLKNKPLYGKIVAVKSNINVKGYKISCASKTLEKYVGTYDATVVKKLRSQGALIVGMTNMDEFAGGSSGETSCYGPTKNPAAMDRIPGGSSSGSAAAVAADLCDMAIGSDTGGSIRNPASHCGIVGFKPSYGVVSRQGLCDLAMSFDQIGPLTKNAEDALVLTNAIKGIDRSDSTSLETPKFEKKDISNYKIGVVKEFMDVTDEKIRNEIEKGIEVFKDMGCKIVDLSYKYIDLALPTYYLINYVEFFSATRKYDGRRYGEFIEEACGEEVLRRILIGKHISEQEFSGKYYKKALQARKSMKKEMLGLFNSADLIVGPTVPKLPHKLGEDVSPMEMYAYDVLTVPTNICGICSGVVRCGNISGVPVGLQIQGAPLEDEKVLSAMIEFEKNY.

Active-site charge relay system residues include Lys55 and Ser130. The active-site Acyl-ester intermediate is Ser154.

It belongs to the amidase family. GatA subfamily. As to quaternary structure, heterotrimer of A, B and C subunits.

The catalysed reaction is L-glutamyl-tRNA(Gln) + L-glutamine + ATP + H2O = L-glutaminyl-tRNA(Gln) + L-glutamate + ADP + phosphate + H(+). Its function is as follows. Allows the formation of correctly charged Gln-tRNA(Gln) through the transamidation of misacylated Glu-tRNA(Gln) in organisms which lack glutaminyl-tRNA synthetase. The reaction takes place in the presence of glutamine and ATP through an activated gamma-phospho-Glu-tRNA(Gln). This chain is Glutamyl-tRNA(Gln) amidotransferase subunit A, found in Methanococcus maripaludis (strain DSM 14266 / JCM 13030 / NBRC 101832 / S2 / LL).